The primary structure comprises 134 residues: L-ectoine synthase (134 aa).

It belongs to the ectoine synthase family.

The catalysed reaction is (2S)-4-acetamido-2-aminobutanoate = L-ectoine + H2O. The protein operates within amine and polyamine biosynthesis; ectoine biosynthesis; L-ectoine from L-aspartate 4-semialdehyde: step 3/3. In terms of biological role, catalyzes the circularization of gamma-N-acetyl-alpha,gamma-diaminobutyric acid (ADABA) to ectoine (1,4,5,6-tetrahydro-2-methyl-4-pyrimidine carboxylic acid), which is an excellent osmoprotectant. This is L-ectoine synthase from Shouchella clausii (strain KSM-K16) (Alkalihalobacillus clausii).